A 33-amino-acid polypeptide reads, in one-letter code: Protamine-1A (33 aa).

The segment at 1-33 (PRRRRSSSRPVRRRRRPRRVSRRRRRRGGRRRR) is disordered.

Testis.

It localises to the nucleus. The protein resides in the chromosome. Protamines substitute for histones in the chromatin of sperm during the haploid phase of spermatogenesis. They compact sperm DNA into a highly condensed, stable and inactive complex. This is Protamine-1A from Oncorhynchus mykiss (Rainbow trout).